Consider the following 285-residue polypeptide: Phosphatidylserine decarboxylase proenzyme (285 aa).

Active-site charge relay system; for autoendoproteolytic cleavage activity residues include aspartate 89, histidine 146, and serine 252. Serine 252 acts as the Schiff-base intermediate with substrate; via pyruvic acid; for decarboxylase activity in catalysis. Serine 252 is modified (pyruvic acid (Ser); by autocatalysis).

It belongs to the phosphatidylserine decarboxylase family. PSD-B subfamily. Prokaryotic type I sub-subfamily. As to quaternary structure, heterodimer of a large membrane-associated beta subunit and a small pyruvoyl-containing alpha subunit. The cofactor is pyruvate. Is synthesized initially as an inactive proenzyme. Formation of the active enzyme involves a self-maturation process in which the active site pyruvoyl group is generated from an internal serine residue via an autocatalytic post-translational modification. Two non-identical subunits are generated from the proenzyme in this reaction, and the pyruvate is formed at the N-terminus of the alpha chain, which is derived from the carboxyl end of the proenzyme. The autoendoproteolytic cleavage occurs by a canonical serine protease mechanism, in which the side chain hydroxyl group of the serine supplies its oxygen atom to form the C-terminus of the beta chain, while the remainder of the serine residue undergoes an oxidative deamination to produce ammonia and the pyruvoyl prosthetic group on the alpha chain. During this reaction, the Ser that is part of the protease active site of the proenzyme becomes the pyruvoyl prosthetic group, which constitutes an essential element of the active site of the mature decarboxylase.

It is found in the cell membrane. The enzyme catalyses a 1,2-diacyl-sn-glycero-3-phospho-L-serine + H(+) = a 1,2-diacyl-sn-glycero-3-phosphoethanolamine + CO2. The protein operates within phospholipid metabolism; phosphatidylethanolamine biosynthesis; phosphatidylethanolamine from CDP-diacylglycerol: step 2/2. In terms of biological role, catalyzes the formation of phosphatidylethanolamine (PtdEtn) from phosphatidylserine (PtdSer). This chain is Phosphatidylserine decarboxylase proenzyme, found in Vibrio parahaemolyticus serotype O3:K6 (strain RIMD 2210633).